A 150-amino-acid chain; its full sequence is Macrodomain Ter protein (150 aa).

It belongs to the MatP family. As to quaternary structure, homodimer.

Its subcellular location is the cytoplasm. In terms of biological role, required for spatial organization of the terminus region of the chromosome (Ter macrodomain) during the cell cycle. Prevents early segregation of duplicated Ter macrodomains during cell division. Binds specifically to matS, which is a 13 bp signature motif repeated within the Ter macrodomain. This Escherichia coli O8 (strain IAI1) protein is Macrodomain Ter protein.